The following is a 147-amino-acid chain: Hemoglobin subunit beta (147 aa).

An N-acetylvaline modification is found at Val-2. In terms of domain architecture, Globin spans 3-147; it reads HLTGEEKSAV…VANALAHKYH (145 aa). At Thr-13 the chain carries Phosphothreonine. Phosphoserine is present on Ser-45. An N6-acetyllysine modification is found at Lys-60. His-64 contacts heme b. Residue Lys-83 is modified to N6-acetyllysine. His-93 contacts heme b. Cys-94 is modified (S-nitrosocysteine). Position 145 is an N6-acetyllysine (Lys-145).

It belongs to the globin family. As to quaternary structure, heterotetramer of two alpha chains and two beta chains. Red blood cells.

In terms of biological role, involved in oxygen transport from the lung to the various peripheral tissues. The protein is Hemoglobin subunit beta (HBB) of Ateles paniscus (Black spider monkey).